The primary structure comprises 357 residues: Red-sensitive opsin-1 (357 aa).

Topologically, residues 1-49 are extracellular; it reads MAEHWGDAIYAARRKGDETTREAMFTYTNSNNTKDPFEGPNYHIAPRWV. Asparagine 31 carries an N-linked (GlcNAc...) asparagine glycan. The chain crosses the membrane as a helical span at residues 50–74; that stretch reads YNVATVWMFFVVVASTFTNGLVLVA. Residues 75 to 86 lie on the Cytoplasmic side of the membrane; the sequence is TAKFKKLRHPLN. Residues 87–112 form a helical membrane-spanning segment; the sequence is WILVNLAIADLGETLFASTISVINQF. The Extracellular segment spans residues 113–126; that stretch reads FGYFILGHPMCIFE. Cysteine 123 and cysteine 200 form a disulfide bridge. A helical transmembrane segment spans residues 127–146; the sequence is GYTVSVCGIAALWSLTVISW. The Cytoplasmic segment spans residues 147-165; sequence ERWVVVCKPFGNVKFDAKW. A helical transmembrane segment spans residues 166 to 189; it reads ASAGIIFSWVWAAAWCAPPIFGWS. Residues 190-215 lie on the Extracellular side of the membrane; sequence RYWPHGLKTSCGPDVFSGSEDPGVQS. The chain crosses the membrane as a helical span at residues 216 to 243; that stretch reads YMVVLMITCCIIPLAIIILCYIAVYLAI. Over 244–265 the chain is Cytoplasmic; it reads HAVAQQQKDSESTQKAEKEVSR. The chain crosses the membrane as a helical span at residues 266–289; it reads MVVVMIFAYCFCWGPYTFFACFAA. Residues 290 to 297 are Extracellular-facing; sequence ANPGYAFH. A helical membrane pass occupies residues 298–322; it reads PLAAAMPAYFAKSATIYNPVIYVFM. The residue at position 309 (lysine 309) is an N6-(retinylidene)lysine. Residues 323-357 lie on the Cytoplasmic side of the membrane; that stretch reads NRQFRVCIMQLFGKKVDDGSEVSTSKTEVSSVAPA.

Belongs to the G-protein coupled receptor 1 family. Opsin subfamily. In terms of processing, phosphorylated on some or all of the serine and threonine residues present in the C-terminal region. As to expression, retinal double cone principal photoreceptor cell outer segments.

The protein resides in the membrane. Functionally, visual pigments are the light-absorbing molecules that mediate vision. They consist of an apoprotein, opsin, covalently linked to cis-retinal. The polypeptide is Red-sensitive opsin-1 (opn1lw1) (Danio rerio (Zebrafish)).